Consider the following 417-residue polypeptide: Serine hydroxymethyltransferase (417 aa).

(6S)-5,6,7,8-tetrahydrofolate is bound by residues L121 and 125–127; that span reads GHL. The residue at position 229 (K229) is an N6-(pyridoxal phosphate)lysine. A (6S)-5,6,7,8-tetrahydrofolate-binding site is contributed by 355-357; it reads SPF.

Belongs to the SHMT family. Homodimer. It depends on pyridoxal 5'-phosphate as a cofactor.

It localises to the cytoplasm. It catalyses the reaction (6R)-5,10-methylene-5,6,7,8-tetrahydrofolate + glycine + H2O = (6S)-5,6,7,8-tetrahydrofolate + L-serine. It functions in the pathway one-carbon metabolism; tetrahydrofolate interconversion. The protein operates within amino-acid biosynthesis; glycine biosynthesis; glycine from L-serine: step 1/1. In terms of biological role, catalyzes the reversible interconversion of serine and glycine with tetrahydrofolate (THF) serving as the one-carbon carrier. This reaction serves as the major source of one-carbon groups required for the biosynthesis of purines, thymidylate, methionine, and other important biomolecules. Also exhibits THF-independent aldolase activity toward beta-hydroxyamino acids, producing glycine and aldehydes, via a retro-aldol mechanism. This chain is Serine hydroxymethyltransferase, found in Salmonella schwarzengrund (strain CVM19633).